A 112-amino-acid polypeptide reads, in one-letter code: Nucleoid-associated protein lpp2803 (112 aa).

Belongs to the YbaB/EbfC family. Homodimer.

It localises to the cytoplasm. The protein resides in the nucleoid. Binds to DNA and alters its conformation. May be involved in regulation of gene expression, nucleoid organization and DNA protection. In Legionella pneumophila (strain Paris), this protein is Nucleoid-associated protein lpp2803.